A 348-amino-acid polypeptide reads, in one-letter code: Protein pelota homolog (348 aa).

Belongs to the eukaryotic release factor 1 family. Pelota subfamily. In terms of assembly, monomer. The cofactor is a divalent metal cation.

It localises to the cytoplasm. Its function is as follows. May function in recognizing stalled ribosomes, interact with stem-loop structures in stalled mRNA molecules, and effect endonucleolytic cleavage of the mRNA. May play a role in the release non-functional ribosomes and degradation of damaged mRNAs. Has endoribonuclease activity. The sequence is that of Protein pelota homolog from Methanococcus maripaludis (strain C7 / ATCC BAA-1331).